A 96-amino-acid polypeptide reads, in one-letter code: Co-chaperonin GroES (96 aa).

The protein belongs to the GroES chaperonin family. As to quaternary structure, heptamer of 7 subunits arranged in a ring. Interacts with the chaperonin GroEL.

It localises to the cytoplasm. Functionally, together with the chaperonin GroEL, plays an essential role in assisting protein folding. The GroEL-GroES system forms a nano-cage that allows encapsulation of the non-native substrate proteins and provides a physical environment optimized to promote and accelerate protein folding. GroES binds to the apical surface of the GroEL ring, thereby capping the opening of the GroEL channel. The sequence is that of Co-chaperonin GroES from Allochromatium vinosum (Chromatium vinosum).